A 211-amino-acid polypeptide reads, in one-letter code: ATP phosphoribosyltransferase (211 aa).

Belongs to the ATP phosphoribosyltransferase family. Short subfamily. In terms of assembly, heteromultimer composed of HisG and HisZ subunits.

The protein resides in the cytoplasm. The enzyme catalyses 1-(5-phospho-beta-D-ribosyl)-ATP + diphosphate = 5-phospho-alpha-D-ribose 1-diphosphate + ATP. It participates in amino-acid biosynthesis; L-histidine biosynthesis; L-histidine from 5-phospho-alpha-D-ribose 1-diphosphate: step 1/9. Its function is as follows. Catalyzes the condensation of ATP and 5-phosphoribose 1-diphosphate to form N'-(5'-phosphoribosyl)-ATP (PR-ATP). Has a crucial role in the pathway because the rate of histidine biosynthesis seems to be controlled primarily by regulation of HisG enzymatic activity. This is ATP phosphoribosyltransferase from Bacillus cereus (strain AH187).